The chain runs to 185 residues: Ribosome-recycling factor (185 aa).

Belongs to the RRF family.

The protein localises to the cytoplasm. Its function is as follows. Responsible for the release of ribosomes from messenger RNA at the termination of protein biosynthesis. May increase the efficiency of translation by recycling ribosomes from one round of translation to another. The polypeptide is Ribosome-recycling factor (Shewanella baltica (strain OS223)).